Consider the following 117-residue polypeptide: Large ribosomal subunit protein uL18 (117 aa).

Belongs to the universal ribosomal protein uL18 family. As to quaternary structure, part of the 50S ribosomal subunit; part of the 5S rRNA/L5/L18/L25 subcomplex. Contacts the 5S and 23S rRNAs.

This is one of the proteins that bind and probably mediate the attachment of the 5S RNA into the large ribosomal subunit, where it forms part of the central protuberance. This Glaesserella parasuis serovar 5 (strain SH0165) (Haemophilus parasuis) protein is Large ribosomal subunit protein uL18.